The primary structure comprises 128 residues: MGIWQGQSRRKATGGKYKIVVKKHKKEMGRESAETHLTDDTKIKIVRVAGGNKKVKLLRTNYANVMDPKTNTCKKVSISNVVGNDANKHYIRRNIITKGAIIETEMGKAKVTSRPGQSGIVNAILINE.

This sequence belongs to the eukaryotic ribosomal protein eS8 family. As to quaternary structure, part of the 30S ribosomal subunit.

The chain is Small ribosomal subunit protein eS8 from Methanococcus aeolicus (strain ATCC BAA-1280 / DSM 17508 / OCM 812 / Nankai-3).